The primary structure comprises 277 residues: 4-hydroxy-3-methylbut-2-enyl diphosphate reductase (277 aa).

Cys12 lines the [4Fe-4S] cluster pocket. His36 and His70 together coordinate (2E)-4-hydroxy-3-methylbut-2-enyl diphosphate. 2 residues coordinate dimethylallyl diphosphate: His36 and His70. His36 and His70 together coordinate isopentenyl diphosphate. Cys92 provides a ligand contact to [4Fe-4S] cluster. (2E)-4-hydroxy-3-methylbut-2-enyl diphosphate is bound at residue His120. His120 contacts dimethylallyl diphosphate. His120 lines the isopentenyl diphosphate pocket. The Proton donor role is filled by Glu122. Residue Thr158 coordinates (2E)-4-hydroxy-3-methylbut-2-enyl diphosphate. Cys186 is a [4Fe-4S] cluster binding site. 3 residues coordinate (2E)-4-hydroxy-3-methylbut-2-enyl diphosphate: Ser214, Asn216, and Ser258. Dimethylallyl diphosphate-binding residues include Ser214, Asn216, and Ser258. Residues Ser214, Asn216, and Ser258 each coordinate isopentenyl diphosphate.

This sequence belongs to the IspH family. [4Fe-4S] cluster serves as cofactor.

It catalyses the reaction isopentenyl diphosphate + 2 oxidized [2Fe-2S]-[ferredoxin] + H2O = (2E)-4-hydroxy-3-methylbut-2-enyl diphosphate + 2 reduced [2Fe-2S]-[ferredoxin] + 2 H(+). It carries out the reaction dimethylallyl diphosphate + 2 oxidized [2Fe-2S]-[ferredoxin] + H2O = (2E)-4-hydroxy-3-methylbut-2-enyl diphosphate + 2 reduced [2Fe-2S]-[ferredoxin] + 2 H(+). The protein operates within isoprenoid biosynthesis; dimethylallyl diphosphate biosynthesis; dimethylallyl diphosphate from (2E)-4-hydroxy-3-methylbutenyl diphosphate: step 1/1. It functions in the pathway isoprenoid biosynthesis; isopentenyl diphosphate biosynthesis via DXP pathway; isopentenyl diphosphate from 1-deoxy-D-xylulose 5-phosphate: step 6/6. Catalyzes the conversion of 1-hydroxy-2-methyl-2-(E)-butenyl 4-diphosphate (HMBPP) into a mixture of isopentenyl diphosphate (IPP) and dimethylallyl diphosphate (DMAPP). Acts in the terminal step of the DOXP/MEP pathway for isoprenoid precursor biosynthesis. The polypeptide is 4-hydroxy-3-methylbut-2-enyl diphosphate reductase (Campylobacter jejuni subsp. doylei (strain ATCC BAA-1458 / RM4099 / 269.97)).